The following is a 95-amino-acid chain: Co-chaperonin GroES (95 aa).

It belongs to the GroES chaperonin family. Heptamer of 7 subunits arranged in a ring. Interacts with the chaperonin GroEL.

It is found in the cytoplasm. Its function is as follows. Together with the chaperonin GroEL, plays an essential role in assisting protein folding. The GroEL-GroES system forms a nano-cage that allows encapsulation of the non-native substrate proteins and provides a physical environment optimized to promote and accelerate protein folding. GroES binds to the apical surface of the GroEL ring, thereby capping the opening of the GroEL channel. This is Co-chaperonin GroES from Francisella tularensis subsp. tularensis (strain FSC 198).